The primary structure comprises 289 residues: G1/S-specific cyclin-D2 (289 aa).

A Cyclin N-terminal domain is found at 26 to 151 (VLQNLLTIEE…VVLGKLKWNL (126 aa)). Residues 264-289 (DQRDGSKSEDELDQASTPTDVRDIDL) are disordered. Residue Ser-271 is modified to Phosphoserine. At Thr-280 the chain carries Phosphothreonine.

It belongs to the cyclin family. Cyclin D subfamily. Interacts with either CDK4 or CDK6 protein kinase to form a serine/threonine kinase holoenzyme complex. The cyclin subunit imparts substrate specificity to the complex. Post-translationally, phosphorylation at Thr-280 by MAP kinases is required for ubiquitination and degradation by the DCX(AMBRA1) complex. In terms of processing, ubiquitinated by the DCX(AMBRA1) complex during the transition from G1 to S cell phase, leading to its degradation: ubiquitination is dependent on Thr-280 phosphorylation. The DCX(AMBRA1) complex represents the major regulator of CCND2 stability during the G1/S transition. Polyubiquitinated by the SCF(FBXL2) complex, leading to proteasomal degradation.

The protein localises to the nucleus. Its subcellular location is the cytoplasm. It is found in the nucleus membrane. In terms of biological role, regulatory component of the cyclin D2-CDK4 (DC) complex that phosphorylates and inhibits members of the retinoblastoma (RB) protein family including RB1 and regulates the cell-cycle during G(1)/S transition. Phosphorylation of RB1 allows dissociation of the transcription factor E2F from the RB/E2F complex and the subsequent transcription of E2F target genes which are responsible for the progression through the G(1) phase. Hypophosphorylates RB1 in early G(1) phase. Cyclin D-CDK4 complexes are major integrators of various mitogenenic and antimitogenic signals. This Homo sapiens (Human) protein is G1/S-specific cyclin-D2.